A 221-amino-acid chain; its full sequence is 3-dehydroquinate dehydratase (221 aa).

Residues Glu33–Arg35 and Arg63 contribute to the 3-dehydroquinate site. His118 serves as the catalytic Proton donor/acceptor. Lys144 (schiff-base intermediate with substrate) is an active-site residue. Residues Arg181, Thr200, and Gln204 each coordinate 3-dehydroquinate.

The protein belongs to the type-I 3-dehydroquinase family. In terms of assembly, homodimer.

It catalyses the reaction 3-dehydroquinate = 3-dehydroshikimate + H2O. The protein operates within metabolic intermediate biosynthesis; chorismate biosynthesis; chorismate from D-erythrose 4-phosphate and phosphoenolpyruvate: step 3/7. In terms of biological role, involved in the third step of the chorismate pathway, which leads to the biosynthesis of aromatic amino acids. Catalyzes the cis-dehydration of 3-dehydroquinate (DHQ) and introduces the first double bond of the aromatic ring to yield 3-dehydroshikimate. The polypeptide is 3-dehydroquinate dehydratase (Methanothermobacter thermautotrophicus (strain ATCC 29096 / DSM 1053 / JCM 10044 / NBRC 100330 / Delta H) (Methanobacterium thermoautotrophicum)).